Consider the following 118-residue polypeptide: Small ribosomal subunit protein uS13 (118 aa).

Positions 94–118 (SLPLRGQRTKTNARTRKGPRKPIKK) are disordered.

The protein belongs to the universal ribosomal protein uS13 family. As to quaternary structure, part of the 30S ribosomal subunit. Forms a loose heterodimer with protein S19. Forms two bridges to the 50S subunit in the 70S ribosome.

Located at the top of the head of the 30S subunit, it contacts several helices of the 16S rRNA. In the 70S ribosome it contacts the 23S rRNA (bridge B1a) and protein L5 of the 50S subunit (bridge B1b), connecting the 2 subunits; these bridges are implicated in subunit movement. Contacts the tRNAs in the A and P-sites. This Vibrio cholerae serotype O1 (strain ATCC 39315 / El Tor Inaba N16961) protein is Small ribosomal subunit protein uS13.